The sequence spans 369 residues: 3-dehydroquinate synthase (369 aa).

NAD(+)-binding positions include 71-76, 105-109, 129-130, lysine 142, lysine 151, and 169-172; these read DGECHK, GVIND, TT, and TLST. Zn(2+)-binding residues include glutamate 184, histidine 247, and histidine 264.

Belongs to the sugar phosphate cyclases superfamily. Dehydroquinate synthase family. Requires Co(2+) as cofactor. It depends on Zn(2+) as a cofactor. NAD(+) is required as a cofactor.

The protein resides in the cytoplasm. It carries out the reaction 7-phospho-2-dehydro-3-deoxy-D-arabino-heptonate = 3-dehydroquinate + phosphate. The protein operates within metabolic intermediate biosynthesis; chorismate biosynthesis; chorismate from D-erythrose 4-phosphate and phosphoenolpyruvate: step 2/7. Catalyzes the conversion of 3-deoxy-D-arabino-heptulosonate 7-phosphate (DAHP) to dehydroquinate (DHQ). This is 3-dehydroquinate synthase from Dichelobacter nodosus (strain VCS1703A).